We begin with the raw amino-acid sequence, 165 residues long: Ribosomal RNA large subunit methyltransferase H (165 aa).

Gly-109 serves as a coordination point for S-adenosyl-L-methionine.

It belongs to the RNA methyltransferase RlmH family. In terms of assembly, homodimer.

The protein resides in the cytoplasm. It carries out the reaction pseudouridine(1915) in 23S rRNA + S-adenosyl-L-methionine = N(3)-methylpseudouridine(1915) in 23S rRNA + S-adenosyl-L-homocysteine + H(+). Its function is as follows. Specifically methylates the pseudouridine at position 1915 (m3Psi1915) in 23S rRNA. This is Ribosomal RNA large subunit methyltransferase H from Methylorubrum populi (strain ATCC BAA-705 / NCIMB 13946 / BJ001) (Methylobacterium populi).